The sequence spans 184 residues: Ribosome maturation factor RimM (184 aa).

Residues 106–184 (PGDYYWYQLE…RMIVDWDPEF (79 aa)) enclose the PRC barrel domain.

It belongs to the RimM family. Binds ribosomal protein uS19.

It localises to the cytoplasm. An accessory protein needed during the final step in the assembly of 30S ribosomal subunit, possibly for assembly of the head region. Essential for efficient processing of 16S rRNA. May be needed both before and after RbfA during the maturation of 16S rRNA. It has affinity for free ribosomal 30S subunits but not for 70S ribosomes. The polypeptide is Ribosome maturation factor RimM (Chromohalobacter salexigens (strain ATCC BAA-138 / DSM 3043 / CIP 106854 / NCIMB 13768 / 1H11)).